A 323-amino-acid polypeptide reads, in one-letter code: Sphingolipid delta(4)-desaturase DES1 (323 aa).

Gly-2 carries the N-myristoyl glycine lipid modification. The next 2 membrane-spanning stretches (helical) occupy residues 41-61 (PNLI…FYIV) and 68-88 (WVIF…TLGI). The Histidine box-1 signature appears at 89–93 (HEIAH). A helical transmembrane segment spans residues 107-127 (WFGMFANLPIGIPYSVSFKSY). A Histidine box-2 motif is present at residues 128 to 132 (HMDHH). The next 3 helical transmembrane spans lie at 152 to 172 (FFCT…FYAF), 184 to 204 (YLEV…YYFL), and 209 to 229 (LVYM…SGHF). The Histidine box-3 signature appears at 259–263 (HNEHH). Ser-307 carries the phosphoserine modification.

This sequence belongs to the fatty acid desaturase type 1 family. DEGS subfamily. In terms of assembly, interacts with RLBP1; the interaction increases synthesis of chromophore-precursors by DEGS1. Myristoylation can target the enzyme to the mitochondria leading to an increase in ceramide levels.

The protein resides in the mitochondrion membrane. The protein localises to the endoplasmic reticulum membrane. It catalyses the reaction an N-acylsphinganine + 2 Fe(II)-[cytochrome b5] + O2 + 2 H(+) = an N-acylsphing-4-enine + 2 Fe(III)-[cytochrome b5] + 2 H2O. The enzyme catalyses all-trans-retinol = 11-cis-retinol. It carries out the reaction all-trans-retinol = 9-cis-retinol. The catalysed reaction is all-trans-retinol = 13-cis-retinol. It catalyses the reaction 11-cis-retinol = 13-cis-retinol. The enzyme catalyses 11-cis-retinol = 9-cis-retinol. In terms of biological role, has sphingolipid-delta-4-desaturase activity. Converts D-erythro-sphinganine to D-erythro-sphingosine (E-sphing-4-enine). Catalyzes the equilibrium isomerization of retinols. This is Sphingolipid delta(4)-desaturase DES1 (DEGS1) from Pongo abelii (Sumatran orangutan).